Consider the following 1257-residue polypeptide: Protein flightless-1 homolog (1257 aa).

LRR repeat units follow at residues 6–31 (LQFVKGIDFSGNDFSGDRFPHDVEQM), 32–54 (TQMTWLKLNDSKLEQVPDELSRC), 56–77 (NLEHLQMAHNQLISVHGELSDL), 78–102 (PRLRSVIVRDNNLKTAGIPTDIFRM), 103–126 (KDLTIIDLSRNQLREVPTNLEYAK), 128–148 (SIVLNLSYNNIETIPNSVCAN), 149–172 (LIDLLFLDLSNNKLDMLPPQIRRL), 174–195 (MLQSLKLSNNPLNHFQLKQLPS), 197–221 (TSLSVLHMSNTNRTLDNIPPTLDDM), 222–244 (HNLRDVDFSENNLPIVPEALFKL), 246–267 (NLRKLNLSGNKIEKLNMTEGEW), 268–290 (ENLETLNMSHNQLTVLPDCVVKL), 292–315 (RLTKLYAANNQLTFEGIPSGIGKL), 316–338 (IQLTVLHLSYNKLELVPEGISRC), 339–361 (VKLQKLKLDHNRLITLPEGIHLL), and 363–384 (DLKVLDLHENENLVMPPKPNDA). Gelsolin-like repeat units lie at residues 523–600 (MDEA…EEFL), 640–714 (AVEM…PEFW), 759–832 (ELPK…MMFR), and 1168–1243 (EKTV…CRFR).

Belongs to the villin/gelsolin family.

In terms of biological role, may play a key role in embryonic cellularization by interacting with both the cytoskeleton and other cellular components. The protein is Protein flightless-1 homolog (fli-1) of Caenorhabditis elegans.